We begin with the raw amino-acid sequence, 103 residues long: Small ribosomal subunit protein uS10 (103 aa).

It belongs to the universal ribosomal protein uS10 family. In terms of assembly, part of the 30S ribosomal subunit.

Its function is as follows. Involved in the binding of tRNA to the ribosomes. The protein is Small ribosomal subunit protein uS10 of Vibrio cholerae serotype O1 (strain ATCC 39541 / Classical Ogawa 395 / O395).